The primary structure comprises 189 residues: Accessory gene regulator protein B (189 aa).

The next 5 helical transmembrane spans lie at Ile49–Ile69, Ser81–Val100, Ile110–Lys130, Tyr143–Phe163, and Ala164–Ile184.

It belongs to the AgrB family.

Its subcellular location is the cell membrane. Its function is as follows. Essential for the production of a quorum sensing system signal molecule, the autoinducing peptide (AIP). This quorum sensing system is responsible for the regulation of the expression of virulence factor genes. Involved in the proteolytic processing of AgrD, the precursor of AIP. The polypeptide is Accessory gene regulator protein B (Staphylococcus aureus (strain COL)).